A 92-amino-acid chain; its full sequence is Signal recognition particle 19 kDa protein (92 aa).

It belongs to the SRP19 family. In terms of assembly, part of the signal recognition particle protein translocation system, which is composed of SRP and FtsY. Archaeal SRP consists of a 7S RNA molecule of 300 nucleotides and two protein subunits: SRP54 and SRP19.

Its subcellular location is the cytoplasm. In terms of biological role, involved in targeting and insertion of nascent membrane proteins into the cytoplasmic membrane. Binds directly to 7S RNA and mediates binding of the 54 kDa subunit of the SRP. This Halobacterium salinarum (strain ATCC 29341 / DSM 671 / R1) protein is Signal recognition particle 19 kDa protein.